We begin with the raw amino-acid sequence, 580 residues long: F-box only protein 24 (580 aa).

The F-box domain occupies 36–82; that stretch reads PISIQLFPPELVEHIISFLPVRDLVALGQTCRYFHEVCDAEGVWRRI. The RCC1 repeat unit spans residues 376–425; sequence GRIFMQGNNRYGQLGTGDKMDRGEPTQVRYLQRPITLWCGLNHSLVLSQS.

In terms of assembly, directly interacts with SKP1 and CUL1.

Substrate-recognition component of the SCF (SKP1-CUL1-F-box protein)-type E3 ubiquitin ligase complex. This Macaca fascicularis (Crab-eating macaque) protein is F-box only protein 24 (FBXO24).